Consider the following 352-residue polypeptide: Holliday junction branch migration complex subunit RuvB (352 aa).

The segment at 1 to 42 (MAIVSSSAGRADSQPPAAKSRVVDASPLPEEASPAREDGLRP) is disordered. The large ATPase domain (RuvB-L) stretch occupies residues 13–201 (SQPPAAKSRV…FGLIQRLEFY (189 aa)). A compositionally biased stretch (basic and acidic residues) spans 33–42 (SPAREDGLRP). ATP is bound by residues L40, R41, G82, K85, T86, T87, R191, Y201, and R238. T86 is a binding site for Mg(2+). The interval 202–273 (GLEDLQAIVE…LVDEALTLHR (72 aa)) is small ATPAse domain (RuvB-S). The interval 276-352 (ARGLDASDRR…RRHLGWPELP (77 aa)) is head domain (RuvB-H). DNA contacts are provided by R331 and R336.

It belongs to the RuvB family. Homohexamer. Forms an RuvA(8)-RuvB(12)-Holliday junction (HJ) complex. HJ DNA is sandwiched between 2 RuvA tetramers; dsDNA enters through RuvA and exits via RuvB. An RuvB hexamer assembles on each DNA strand where it exits the tetramer. Each RuvB hexamer is contacted by two RuvA subunits (via domain III) on 2 adjacent RuvB subunits; this complex drives branch migration. In the full resolvosome a probable DNA-RuvA(4)-RuvB(12)-RuvC(2) complex forms which resolves the HJ.

It localises to the cytoplasm. The enzyme catalyses ATP + H2O = ADP + phosphate + H(+). In terms of biological role, the RuvA-RuvB-RuvC complex processes Holliday junction (HJ) DNA during genetic recombination and DNA repair, while the RuvA-RuvB complex plays an important role in the rescue of blocked DNA replication forks via replication fork reversal (RFR). RuvA specifically binds to HJ cruciform DNA, conferring on it an open structure. The RuvB hexamer acts as an ATP-dependent pump, pulling dsDNA into and through the RuvAB complex. RuvB forms 2 homohexamers on either side of HJ DNA bound by 1 or 2 RuvA tetramers; 4 subunits per hexamer contact DNA at a time. Coordinated motions by a converter formed by DNA-disengaged RuvB subunits stimulates ATP hydrolysis and nucleotide exchange. Immobilization of the converter enables RuvB to convert the ATP-contained energy into a lever motion, pulling 2 nucleotides of DNA out of the RuvA tetramer per ATP hydrolyzed, thus driving DNA branch migration. The RuvB motors rotate together with the DNA substrate, which together with the progressing nucleotide cycle form the mechanistic basis for DNA recombination by continuous HJ branch migration. Branch migration allows RuvC to scan DNA until it finds its consensus sequence, where it cleaves and resolves cruciform DNA. This chain is Holliday junction branch migration complex subunit RuvB, found in Prochlorococcus marinus (strain MIT 9303).